Reading from the N-terminus, the 179-residue chain is Small ribosomal subunit protein uS5 (179 aa).

The region spanning 13–76 is the S5 DRBM domain; it reads LDERVVLINR…EAAKRNLIRV (64 aa). A disordered region spans residues 160–179; it reads DMTPQELNARRMRRETTEAA.

It belongs to the universal ribosomal protein uS5 family. As to quaternary structure, part of the 30S ribosomal subunit. Contacts proteins S4 and S8.

Functionally, with S4 and S12 plays an important role in translational accuracy. In terms of biological role, located at the back of the 30S subunit body where it stabilizes the conformation of the head with respect to the body. The protein is Small ribosomal subunit protein uS5 of Chloroflexus aggregans (strain MD-66 / DSM 9485).